Reading from the N-terminus, the 363-residue chain is Endopolygalacturonase B (363 aa).

A signal peptide spans 1-20; it reads MQLLQSSVIAATVGAALVAA. The propeptide occupies 21–28; it reads VPVELKAR. Residues Cys-31 and Cys-46 are joined by a disulfide bond. PbH1 repeat units lie at residues 158–187, 188–209, 210–230, 239–260, 268–290, and 302–347; these read SDNL…DVGS, STYI…AINS, GSHI…SIGS, VEDV…RIKT, VSNV…IVEQ, and TNGI…SITG. A glycan (N-linked (GlcNAc...) asparagine) is linked at Asn-162. Asp-202 (proton donor) is an active-site residue. Cysteines 204 and 220 form a disulfide. His-224 is a catalytic residue. Intrachain disulfides connect Cys-330-Cys-335 and Cys-354-Cys-363. N-linked (GlcNAc...) asparagine glycosylation is present at Asn-356.

This sequence belongs to the glycosyl hydrolase 28 family.

It localises to the secreted. It catalyses the reaction (1,4-alpha-D-galacturonosyl)n+m + H2O = (1,4-alpha-D-galacturonosyl)n + (1,4-alpha-D-galacturonosyl)m.. Involved in maceration and soft-rotting of plant tissue. Hydrolyzes the 1,4-alpha glycosidic bonds of de-esterified pectate in the smooth region of the plant cell wall. The polypeptide is Endopolygalacturonase B (pgaB) (Aspergillus oryzae (strain ATCC 42149 / RIB 40) (Yellow koji mold)).